We begin with the raw amino-acid sequence, 639 residues long: Chaperone protein DnaK (639 aa).

Phosphothreonine; by autocatalysis is present on threonine 198. The tract at residues 604–639 is disordered; sequence KSQAQGGDNADAGKQANAAADDVVDAEFEEVKDDKK. The span at 606-624 shows a compositional bias: low complexity; the sequence is QAQGGDNADAGKQANAAAD. The segment covering 625–639 has biased composition (acidic residues); that stretch reads DVVDAEFEEVKDDKK.

The protein belongs to the heat shock protein 70 family.

Acts as a chaperone. The chain is Chaperone protein DnaK from Shewanella baltica (strain OS223).